The chain runs to 330 residues: G-protein coupled receptor 3 (330 aa).

The Extracellular portion of the chain corresponds to methionine 1–alanine 42. Residue asparagine 20 is glycosylated (N-linked (GlcNAc...) asparagine). A helical transmembrane segment spans residues tryptophan 43–valine 62. Over alanine 63–proline 74 the chain is Cytoplasmic. Residues methionine 75–alanine 98 form a helical membrane-spanning segment. Residues alanine 99 to leucine 110 are Extracellular-facing. A helical membrane pass occupies residues methionine 111–valine 132. Residues aspartate 133–threonine 153 are Cytoplasmic-facing. Residues tyrosine 154–leucine 173 traverse the membrane as a helical segment. The Extracellular segment spans residues alanine 174–leucine 198. A helical membrane pass occupies residues alanine 199–cysteine 217. At arginine 218–glycine 245 the chain is on the cytoplasmic side. The helical transmembrane segment at isoleucine 246–alanine 272 threads the bilayer. The Extracellular portion of the chain corresponds to aspartate 273–leucine 277. The chain crosses the membrane as a helical span at residues tyrosine 278–phenylalanine 299. The Cytoplasmic segment spans residues arginine 300–valine 330. Cysteine 313 carries the S-palmitoyl cysteine lipid modification. A phosphoserine mark is found at serine 324, serine 326, and serine 328.

This sequence belongs to the G-protein coupled receptor 1 family. In terms of tissue distribution, expressed in both the forebrain and hindbrain, with the highest level in habenula. Lower level expression in the testis. Expressed in several metabolically active peripheral tissues, although at lower levels than in the central nervous system (CNS).

Its subcellular location is the cell membrane. Constitutively active G-protein coupled receptor that maintains high 3'-5'-cyclic adenosine monophosphate (cAMP) levels that a plays a role in serveral processes including meiotic arrest in oocytes or neuronal development via activation of numerous intracellular signaling pathways. Acts as an essential activator of thermogenic adipocytes and drives thermogenesis via its intrinsic G(s)-coupling activity without the requirement of a ligand. Has a potential role in modulating a number of brain functions, including behavioral responses to stress, amyloid-beta peptide generation in neurons. Stimulates neurite outgrowth in cerebellar granular neurons modulated via PKA, ERK, and most strongly PI3K-mediated signaling pathways. The chain is G-protein coupled receptor 3 (Gpr3) from Mus musculus (Mouse).